The sequence spans 424 residues: Alkaline nuclease (424 aa).

Belongs to the baculo-herpesviridae alkaline nuclease family. In terms of assembly, interacts with LEF-3.

The protein resides in the host nucleus. May play a role in maturation and encapsidation of viral replicated genome, by promoting DNA homologous recombination. Exhibits endonuclease and 5'-&gt;3' exonuclease activities. The endonuclease activity displays a specificity for ssDNA in vitro. The polypeptide is Alkaline nuclease (ALK-EXO) (Orgyia pseudotsugata (Douglas-fir tussock moth)).